Here is a 504-residue protein sequence, read N- to C-terminus: Anaerobic nitric oxide reductase transcription regulator NorR (504 aa).

Asp57 carries the 4-aspartylphosphate modification. The Sigma-54 factor interaction domain maps to 187-416 (MIGLSPGMTQ…LEHAIHRAVV (230 aa)). Residues 215-222 (GETGTGKE) and 278-287 (ADNGTLFLDE) contribute to the ATP site. Positions 479-498 (WAACARMLETDVANLHRLAK) form a DNA-binding region, H-T-H motif.

It functions in the pathway nitrogen metabolism; nitric oxide reduction. Its function is as follows. Required for the expression of anaerobic nitric oxide (NO) reductase, acts as a transcriptional activator for at least the norVW operon. Activation also requires sigma-54. In Shigella dysenteriae serotype 1 (strain Sd197), this protein is Anaerobic nitric oxide reductase transcription regulator NorR.